A 656-amino-acid chain; its full sequence is Rab proteins geranylgeranyltransferase component A 2 (656 aa).

Disordered regions lie at residues 188-209 (MHTV…EDKA) and 609-656 (PPPN…HLQN). Residues 639 to 656 (ESSEESKNLESPEKHLQN) show a composition bias toward basic and acidic residues. S649 is modified (phosphoserine).

The protein belongs to the Rab GDI family. In terms of assembly, monomer. Heterotrimer composed of RABGGTA, RABGGTB and CHML; within this trimer, RABGGTA and RABGGTB form the catalytic component B, while CHML (component A) mediates Rab protein binding. Interacts with RAB1A, RAB7A and RAB27A, but has much lower affinity for RAB1A, RAB7A and RAB27A than CHM. Interacts with the non-phosphorylated forms of RAB3A, RAB3B, RAB3C, RAB3D, RAB5B, RAB5C, RAB8A, RAB8B, RAB10, RAB12, RAB35, and RAB43.

It localises to the cytoplasm. Its subcellular location is the cytosol. Functionally, substrate-binding subunit (component A) of the Rab geranylgeranyltransferase (GGTase) complex. Binds unprenylated Rab proteins and presents the substrate peptide to the catalytic component B. The component A is thought to be regenerated by transferring its prenylated Rab back to the donor membrane. Less effective than CHM in supporting prenylation of Rab3 family. The polypeptide is Rab proteins geranylgeranyltransferase component A 2 (CHML) (Homo sapiens (Human)).